Reading from the N-terminus, the 365-residue chain is Snurportin-1 (365 aa).

Residues 10 to 72 (GGVALAAPNS…RLAEGDWAGV (63 aa)) form the IBB domain. 2 disordered regions span residues 15–34 (AAPN…KGRG) and 69–90 (WAGV…EMEV). The span at 73 to 90 (ESDEDGGEDGDGEEEMEV) shows a compositional bias: acidic residues. Residues 129-131 (GKR) are interaction with m3G-cap structure. The necessary for binding to the m3G-cap structure stretch occupies residues 211–333 (LSSKIQEEEG…GKAQPSAEAA (123 aa)). The segment at 317 to 365 (RSKKLAAGKAQPSAEAAARNGHYELEHLSTPQPANSAQGQEEAGSQMEN) is disordered. Residues 345 to 355 (STPQPANSAQG) are compositionally biased toward polar residues.

Belongs to the snurportin family.

It is found in the nucleus. The protein localises to the cytoplasm. In terms of biological role, functions as an U snRNP-specific nuclear import adapter. Involved in the trimethylguanosine (m3G)-cap-dependent nuclear import of U snRNPs. Binds specifically to the terminal m3G-cap U snRNAs. This is Snurportin-1 (SNUPN) from Gallus gallus (Chicken).